Reading from the N-terminus, the 411-residue chain is BRO1 domain-containing protein BROX (411 aa).

The BRO1 domain maps to 90 to 408 (FKWTDTLQGQ…DIKPQKDTGC (319 aa)). K283 carries the N6-acetyllysine modification. The interval 372–411 (AFDLTKRPKDDSTKPKPEEEVKPVKEPDIKPQKDTGCYIS) is disordered. The span at 375–404 (LTKRPKDDSTKPKPEEEVKPVKEPDIKPQK) shows a compositional bias: basic and acidic residues. Residue C408 is modified to Cysteine methyl ester. C408 carries S-farnesyl cysteine lipidation. Residues 409 to 411 (YIS) constitute a propeptide, removed in mature form.

Belongs to the BROX family. In terms of assembly, monomer. Interacts with CHMP4B. Interacts with CHMP5: this interaction allows the recruitment of BROX to cellular membranes. Interacts with SYN2; this interaction promotes SYN2 ubiquitination and facilitates the relaxation of mechanical stress imposed by compressive actin fibers at the rupture site. In terms of processing, farnesylation is required for nuclear envelope localization.

The protein resides in the nucleus membrane. Its function is as follows. Nuclear envelope-associated factor that is involved in the nuclear envelope ruptures during interphase (NERDI) repair, where it is locally recruited by CHMP5 and reduces cytoskeletal stress through its action on SYN2 to help reseal the ruptured membrane. The chain is BRO1 domain-containing protein BROX from Homo sapiens (Human).